The sequence spans 266 residues: Calpain small subunit 1 (266 aa).

Met1 carries the post-translational modification N-acetylmethionine. A Phosphoserine modification is found at Ser6. Residues Glu94 to Arg128 form the EF-hand 1; atypical domain. 10 residues coordinate Ca(2+): Ala107, Asp110, Glu112, Glu117, Asp135, Asp150, Asp152, Thr154, Lys156, and Glu161. 4 consecutive EF-hand domains span residues Phe137 to Lys170, Asn167 to His202, Leu203 to Leu231, and Val232 to Ser266. N6-acetyllysine is present on Lys177. The Ca(2+) site is built by Asp180, Asp182, Ser184, Thr186, Glu191, and Asp223.

As to quaternary structure, homodimer or heterodimer of a large (catalytic) and a small (regulatory) subunit. In presence of calcium, the heterodimer dissociates.

It is found in the cytoplasm. The protein resides in the cell membrane. Its function is as follows. Regulatory subunit of the calcium-regulated non-lysosomal thiol-protease which catalyzes limited proteolysis of substrates involved in cytoskeletal remodeling and signal transduction. Essential for embryonic development. In Sus scrofa (Pig), this protein is Calpain small subunit 1 (CAPNS1).